Reading from the N-terminus, the 393-residue chain is Dual specificity mitogen-activated protein kinase kinase 1 (393 aa).

Residues 1-27 (MPKKKPTPIQLNPAPDGSAVNGTSSAE) are disordered. The Protein kinase domain maps to 68 to 361 (FEKISELGAG…LKQLMVHAFI (294 aa)). Residues 74–82 (LGAGNGGVV) and Lys-97 contribute to the ATP site. Asp-190 serves as the catalytic Proton acceptor. Ser-218 and Ser-222 each carry phosphoserine; by RAF. The interval 270 to 307 (ELELLFGCHVEGDAAETPPRPRTPGRPLSSYGMDSRPP) is RAF1-binding. Thr-286 carries the post-translational modification Phosphothreonine. The residue at position 292 (Thr-292) is a Phosphothreonine; by MAPK1. Ser-298 bears the Phosphoserine; by PAK mark.

The protein belongs to the protein kinase superfamily. STE Ser/Thr protein kinase family. MAP kinase kinase subfamily. In terms of assembly, found in a complex with at least BRAF, HRAS, MAP2K1, MAPK3/ERK1 and RGS14. Forms a heterodimer with MAP2K2/MEK2. Forms heterodimers with KSR2 which further dimerize to form tetramers. Interacts with KSR1 or KSR2 and BRAF; the interaction with KSR1 or KSR2 mediates KSR1-BRAF or KSR2-BRAF dimerization. Interacts with ARBB2, LAMTOR3, MAPK1/ERK2 and RAF1. Interacts with MAPK1/ERK2. Interacts with MORG1. Interacts with PPARG. Interacts with SGK1. Interacts with BIRC6/bruce. Interacts with KAT7; the interaction promotes KAT7 phosphorylation. Interacts with RAF1 and NEK10; the interaction is required for ERK1/2-signaling pathway activation in response to UV irradiation. Interacts with TRAF3IP3. Interacts with MOS. Phosphorylation at Ser-218 and Ser-222 by MAP kinase kinase kinases (BRAF or MEKK1) positively regulates kinase activity. Also phosphorylated at Thr-292 by MAPK1/ERK2 and at Ser-298 by PAK. MAPK1/ERK2 phosphorylation of Thr-292 occurs in response to cellular adhesion and leads to inhibition of Ser-298 phosphorylation by PAK. Autophosphorylated at Ser-218 and Ser-222, autophosphosphorylation is promoted by NEK10 following UV irradiation.

It localises to the cytoplasm. It is found in the cytoskeleton. Its subcellular location is the microtubule organizing center. The protein resides in the centrosome. The protein localises to the spindle pole body. It localises to the nucleus. It is found in the membrane. It catalyses the reaction L-seryl-[protein] + ATP = O-phospho-L-seryl-[protein] + ADP + H(+). It carries out the reaction L-threonyl-[protein] + ATP = O-phospho-L-threonyl-[protein] + ADP + H(+). The enzyme catalyses L-tyrosyl-[protein] + ATP = O-phospho-L-tyrosyl-[protein] + ADP + H(+). Ras proteins such as HRAS mediate the activation of RAF proteins such as RAF1 or BRAF which in turn activate extracellular signal-regulated kinases (ERK) through MAPK (mitogen-activated protein kinases) and ERK kinases MAP2K1/MEK1 and MAP2K2/MEK2. Activation occurs through phosphorylation of Ser-218 and Ser-222. MAP2K1/MEK1 binds KSR1 or KSR2 releasing the inhibitory intramolecular interaction between KSR1 or KSR2 protein kinase and N-terminal domains. This allows KSR1 or KSR2 dimerization with BRAF leading to BRAF activation and phosphorylation of MAP2K1. MAP2K1/MEK1 is also the target of negative feed-back regulation by its substrate kinases, such as MAPK1/ERK2. These phosphorylate MAP2K1/MEK1 on Thr-292, thereby facilitating dephosphorylation of the activating residues Ser-218 and Ser-222. Inhibited by serine/threonine phosphatase 2A. Dual specificity protein kinase which acts as an essential component of the MAP kinase signal transduction pathway. Binding of extracellular ligands such as growth factors, cytokines and hormones to their cell-surface receptors activates RAS and this initiates RAF1 activation. RAF1 then further activates the dual-specificity protein kinases MAP2K1/MEK1 and MAP2K2/MEK2. Both MAP2K1/MEK1 and MAP2K2/MEK2 function specifically in the MAPK/ERK cascade, and catalyze the concomitant phosphorylation of a threonine and a tyrosine residue in a Thr-Glu-Tyr sequence located in the extracellular signal-regulated kinases MAPK3/ERK1 and MAPK1/ERK2, leading to their activation and further transduction of the signal within the MAPK/ERK cascade. Activates BRAF in a KSR1 or KSR2-dependent manner; by binding to KSR1 or KSR2 releases the inhibitory intramolecular interaction between KSR1 or KSR2 protein kinase and N-terminal domains which promotes KSR1 or KSR2-BRAF dimerization and BRAF activation. Depending on the cellular context, this pathway mediates diverse biological functions such as cell growth, adhesion, survival and differentiation, predominantly through the regulation of transcription, metabolism and cytoskeletal rearrangements. One target of the MAPK/ERK cascade is peroxisome proliferator-activated receptor gamma (PPARG), a nuclear receptor that promotes differentiation and apoptosis. MAP2K1/MEK1 has been shown to export PPARG from the nucleus. The MAPK/ERK cascade is also involved in the regulation of endosomal dynamics, including lysosome processing and endosome cycling through the perinuclear recycling compartment (PNRC), as well as in the fragmentation of the Golgi apparatus during mitosis. This is Dual specificity mitogen-activated protein kinase kinase 1 (Map2k1) from Mus musculus (Mouse).